Consider the following 438-residue polypeptide: Putative ZDHHC-type palmitoyltransferase 7 (438 aa).

N-linked (GlcNAc...) asparagine glycosylation is found at N12 and N13. 2 helical membrane passes run 48–68 (IFCL…GTIL) and 77–97 (YFYL…YFLI). 3 N-linked (GlcNAc...) asparagine glycosylation sites follow: N119, N144, and N157. Residues 183 to 239 (EDSINDDTITTTTTTTTTTSTSTIPEISNDDDDNNNENNNDNVNNRNNNNSNGEKED) are disordered. Composition is skewed to low complexity over residues 190-206 (TITT…TSTI) and 218-234 (NENN…NNSN). Residue N231 is glycosylated (N-linked (GlcNAc...) asparagine). A DHHC domain is found at 249–299 (YFCKKCLVDIPLRTKHCVKCNRCVLKYDHHCVFIGGCVGLNNHKNFLLFLL). Transmembrane regions (helical) follow at residues 294 to 314 (FLLF…IIVT) and 330 to 350 (IAII…FALF). N360 is a glycosylation site (N-linked (GlcNAc...) asparagine).

It belongs to the DHHC palmitoyltransferase family.

It is found in the membrane. It carries out the reaction L-cysteinyl-[protein] + hexadecanoyl-CoA = S-hexadecanoyl-L-cysteinyl-[protein] + CoA. In Dictyostelium discoideum (Social amoeba), this protein is Putative ZDHHC-type palmitoyltransferase 7.